The following is a 155-amino-acid chain: uncharacterized protein (155 aa).

Residues 1 to 23 (MRLMRNLMNALLLGAAASSLAVA) form the signal peptide. Cysteine 86 and cysteine 91 are disulfide-bonded.

The protein belongs to the ivy family.

The protein localises to the periplasm. This is an uncharacterized protein from Pseudomonas aeruginosa (strain ATCC 15692 / DSM 22644 / CIP 104116 / JCM 14847 / LMG 12228 / 1C / PRS 101 / PAO1).